Consider the following 82-residue polypeptide: UPF0437 protein in nifX-nifW intergenic region (82 aa).

The protein belongs to the UPF0437 family.

This is UPF0437 protein in nifX-nifW intergenic region from Frankia alni.